A 117-amino-acid chain; its full sequence is Large ribosomal subunit protein bL20 (117 aa).

Belongs to the bacterial ribosomal protein bL20 family.

Functionally, binds directly to 23S ribosomal RNA and is necessary for the in vitro assembly process of the 50S ribosomal subunit. It is not involved in the protein synthesizing functions of that subunit. The polypeptide is Large ribosomal subunit protein bL20 (Actinobacillus pleuropneumoniae serotype 7 (strain AP76)).